We begin with the raw amino-acid sequence, 373 residues long: Queuine tRNA-ribosyltransferase (373 aa).

Asp93 (proton acceptor) is an active-site residue. Substrate contacts are provided by residues 93–97 (DSGGF), Asp147, Gln189, and Gly216. The segment at 247–253 (GVGAPED) is RNA binding. The active-site Nucleophile is the Asp266. Positions 271–275 (TRIAR) are RNA binding; important for wobble base 34 recognition. Zn(2+) is bound by residues Cys304, Cys306, Cys309, and His335.

It belongs to the queuine tRNA-ribosyltransferase family. As to quaternary structure, homodimer. Within each dimer, one monomer is responsible for RNA recognition and catalysis, while the other monomer binds to the replacement base PreQ1. It depends on Zn(2+) as a cofactor.

It catalyses the reaction 7-aminomethyl-7-carbaguanine + guanosine(34) in tRNA = 7-aminomethyl-7-carbaguanosine(34) in tRNA + guanine. Its pathway is tRNA modification; tRNA-queuosine biosynthesis. Functionally, catalyzes the base-exchange of a guanine (G) residue with the queuine precursor 7-aminomethyl-7-deazaguanine (PreQ1) at position 34 (anticodon wobble position) in tRNAs with GU(N) anticodons (tRNA-Asp, -Asn, -His and -Tyr). Catalysis occurs through a double-displacement mechanism. The nucleophile active site attacks the C1' of nucleotide 34 to detach the guanine base from the RNA, forming a covalent enzyme-RNA intermediate. The proton acceptor active site deprotonates the incoming PreQ1, allowing a nucleophilic attack on the C1' of the ribose to form the product. After dissociation, two additional enzymatic reactions on the tRNA convert PreQ1 to queuine (Q), resulting in the hypermodified nucleoside queuosine (7-(((4,5-cis-dihydroxy-2-cyclopenten-1-yl)amino)methyl)-7-deazaguanosine). The polypeptide is Queuine tRNA-ribosyltransferase (Halothermothrix orenii (strain H 168 / OCM 544 / DSM 9562)).